The sequence spans 435 residues: 3-phosphoshikimate 1-carboxyvinyltransferase (435 aa).

Lys-22, Ser-23, and Arg-27 together coordinate 3-phosphoshikimate. A phosphoenolpyruvate-binding site is contributed by Lys-22. Phosphoenolpyruvate is bound by residues Gly-95 and Arg-123. The 3-phosphoshikimate site is built by Ser-168, Gln-170, Asp-319, and Lys-346. Gln-170 provides a ligand contact to phosphoenolpyruvate. Residue Asp-319 is the Proton acceptor of the active site. Phosphoenolpyruvate is bound by residues Arg-350 and Arg-393.

The protein belongs to the EPSP synthase family. As to quaternary structure, monomer.

The protein resides in the cytoplasm. The catalysed reaction is 3-phosphoshikimate + phosphoenolpyruvate = 5-O-(1-carboxyvinyl)-3-phosphoshikimate + phosphate. It functions in the pathway metabolic intermediate biosynthesis; chorismate biosynthesis; chorismate from D-erythrose 4-phosphate and phosphoenolpyruvate: step 6/7. Catalyzes the transfer of the enolpyruvyl moiety of phosphoenolpyruvate (PEP) to the 5-hydroxyl of shikimate-3-phosphate (S3P) to produce enolpyruvyl shikimate-3-phosphate and inorganic phosphate. The polypeptide is 3-phosphoshikimate 1-carboxyvinyltransferase (Chloroflexus aurantiacus (strain ATCC 29364 / DSM 637 / Y-400-fl)).